The sequence spans 249 residues: tRNA (guanine-N(1)-)-methyltransferase (249 aa).

S-adenosyl-L-methionine-binding positions include G113 and 133–138 (IGDFVL).

It belongs to the RNA methyltransferase TrmD family. In terms of assembly, homodimer.

It is found in the cytoplasm. The enzyme catalyses guanosine(37) in tRNA + S-adenosyl-L-methionine = N(1)-methylguanosine(37) in tRNA + S-adenosyl-L-homocysteine + H(+). Specifically methylates guanosine-37 in various tRNAs. This is tRNA (guanine-N(1)-)-methyltransferase from Aliivibrio salmonicida (strain LFI1238) (Vibrio salmonicida (strain LFI1238)).